The chain runs to 256 residues: NAD-dependent protein deacylase 4 (256 aa).

Residues 1 to 250 (MRLPAEALKD…AKIHESLSTG (250 aa)) form the Deacetylase sirtuin-type domain. An NAD(+)-binding site is contributed by 19 to 39 (GAGISAESGILTYLDQMPKLW). The substrate site is built by Y64 and R67. 98 to 101 (QNVD) provides a ligand contact to NAD(+). The active-site Proton acceptor is the H116. Residues C124, C127, C152, and C155 each contribute to the Zn(2+) site. Residues 192–194 (GTS), 218–220 (NTV), and A236 contribute to the NAD(+) site.

This sequence belongs to the sirtuin family. Class III subfamily. Requires Zn(2+) as cofactor.

It is found in the cytoplasm. It carries out the reaction N(6)-acetyl-L-lysyl-[protein] + NAD(+) + H2O = 2''-O-acetyl-ADP-D-ribose + nicotinamide + L-lysyl-[protein]. The catalysed reaction is N(6)-succinyl-L-lysyl-[protein] + NAD(+) + H2O = 2''-O-succinyl-ADP-D-ribose + nicotinamide + L-lysyl-[protein]. Functionally, NAD-dependent lysine deacetylase and desuccinylase that specifically removes acetyl and succinyl groups on target proteins. Modulates the activities of several proteins which are inactive in their acylated form. The chain is NAD-dependent protein deacylase 4 from Pseudomonas syringae pv. tomato (strain ATCC BAA-871 / DC3000).